Consider the following 297-residue polypeptide: MATH domain and coiled-coil domain-containing protein At2g05420 (297 aa).

The MATH domain occupies S7–V139. Residues K239–K281 are a coiled coil.

In Arabidopsis thaliana (Mouse-ear cress), this protein is MATH domain and coiled-coil domain-containing protein At2g05420.